We begin with the raw amino-acid sequence, 88 residues long: Sec-independent protein translocase protein TatA (88 aa).

The chain crosses the membrane as a helical span at residues 3 to 23 (IFGVGLPEVTVILILALLIFG). Residues 56–66 (MKEEDKDESPK) show a composition bias toward basic and acidic residues. The disordered stretch occupies residues 56–88 (MKEEDKDESPKSIESNQSNEINQEKIDSENSNN). Positions 67 to 76 (SIESNQSNEI) are enriched in polar residues. Positions 77–88 (NQEKIDSENSNN) are enriched in basic and acidic residues.

The protein belongs to the TatA/E family. As to quaternary structure, forms a complex with TatC.

Its subcellular location is the cell inner membrane. Its function is as follows. Part of the twin-arginine translocation (Tat) system that transports large folded proteins containing a characteristic twin-arginine motif in their signal peptide across membranes. TatA could form the protein-conducting channel of the Tat system. This chain is Sec-independent protein translocase protein TatA, found in Prochlorococcus marinus (strain MIT 9301).